Here is a 90-residue protein sequence, read N- to C-terminus: Sec-independent protein translocase protein TatAo (90 aa).

Residues Phe8 to Phe28 form a helical membrane-spanning segment. Residues Ser39–Arg90 are disordered. The span at Glu46 to Glu63 shows a compositional bias: basic and acidic residues. A compositionally biased stretch (acidic residues) spans Gly64–Arg90.

Belongs to the TatA/E family. As to quaternary structure, forms a complex with TatC. Cytoplasmic and membrane-bound TatA form high-molecular-weight complexes.

The protein resides in the cell membrane. It localises to the cytoplasm. Part of the twin-arginine translocation (Tat) system that transports large folded proteins containing a characteristic twin-arginine motif in their signal peptide across membranes. TatA could form the protein-conducting channel of the Tat system. In Haloferax volcanii (strain ATCC 29605 / DSM 3757 / JCM 8879 / NBRC 14742 / NCIMB 2012 / VKM B-1768 / DS2) (Halobacterium volcanii), this protein is Sec-independent protein translocase protein TatAo.